A 612-amino-acid polypeptide reads, in one-letter code: Isocitrate dehydrogenase kinase/phosphatase (612 aa).

ATP-binding positions include 327-333 and Lys348; that span reads APGIKGL. Asp383 is an active-site residue. Residues 593–612 are disordered; it reads AGAASNEQDAPDAGRSVRAA.

It belongs to the AceK family.

It localises to the cytoplasm. It carries out the reaction L-seryl-[isocitrate dehydrogenase] + ATP = O-phospho-L-seryl-[isocitrate dehydrogenase] + ADP + H(+). Functionally, bifunctional enzyme which can phosphorylate or dephosphorylate isocitrate dehydrogenase (IDH) on a specific serine residue. This is a regulatory mechanism which enables bacteria to bypass the Krebs cycle via the glyoxylate shunt in response to the source of carbon. When bacteria are grown on glucose, IDH is fully active and unphosphorylated, but when grown on acetate or ethanol, the activity of IDH declines drastically concomitant with its phosphorylation. The chain is Isocitrate dehydrogenase kinase/phosphatase from Paraburkholderia xenovorans (strain LB400).